A 1715-amino-acid polypeptide reads, in one-letter code: Protein PHYLLO, chloroplastic (1715 aa).

Residues 1 to 19 (MRSSFLVSNPPFLPSLIPR) constitute a chloroplast transit peptide. Residues 20–273 (YSSRKSIRRS…EKSIFQVSSH (254 aa)) are inactive isochorismate synthase. The segment at 363 to 933 (NAVWASAIIE…GTKSELEDAL (571 aa)) is 2-succinyl-5-enolpyruvyl-6-hydroxy-3-cyclohexene-1-carboxylate synthase. Residues 429 to 449 (AVIITSSGTAVSNLLPAVVEA) traverse the membrane as a helical segment. An O-succinylbenzoate synthase region spans residues 981 to 1364 (FLHPMIKNVL…SEDVMMNTLG (384 aa)). The active-site Proton donor; for the o-succinylbenzoate synthase activity is K1170. Mg(2+) contacts are provided by D1202, E1228, and D1251. The active-site Proton acceptor; for the o-succinylbenzoate synthase activity is the K1279. Residues 1418 to 1715 (HFIRVHDVGE…QKLLLALKEM (298 aa)) form a 2-succinyl-6-hydroxy-2,4-cyclohexadiene-1-carboxylate synthase region. The AB hydrolase-1 domain occupies 1435 to 1540 (LFLHGFLGTG…EGAVVVSGSP (106 aa)).

It in the N-terminal section; belongs to the isochorismate synthase family. The protein in the 2nd section; belongs to the TPP enzyme family. MenD subfamily. In the 3rd section; belongs to the mandelate racemase/muconate lactonizing enzyme family. MenC type 1 subfamily. This sequence in the C-terminal section; belongs to the AB hydrolase superfamily. MenH family. It depends on Mg(2+) as a cofactor. Mn(2+) is required as a cofactor. Requires thiamine diphosphate as cofactor.

It is found in the plastid. Its subcellular location is the chloroplast membrane. The enzyme catalyses isochorismate + 2-oxoglutarate + H(+) = 5-enolpyruvoyl-6-hydroxy-2-succinyl-cyclohex-3-ene-1-carboxylate + CO2. It catalyses the reaction (1R,6R)-6-hydroxy-2-succinyl-cyclohexa-2,4-diene-1-carboxylate = 2-succinylbenzoate + H2O. The catalysed reaction is 5-enolpyruvoyl-6-hydroxy-2-succinyl-cyclohex-3-ene-1-carboxylate = (1R,6R)-6-hydroxy-2-succinyl-cyclohexa-2,4-diene-1-carboxylate + pyruvate. Functionally, multifunctional enzyme required for phylloquinone (vitamin K1) biosynthesis. This is Protein PHYLLO, chloroplastic (PHYLLO) from Arabidopsis thaliana (Mouse-ear cress).